The following is a 1756-amino-acid chain: Multifunctional conjugation protein TraI (1756 aa).

The DNA relaxase stretch occupies residues 1–330 (MMSIAQVRSA…TQAIAGLSER (330 aa)). The active-site O-(5'-phospho-DNA)-tyrosine intermediate; for relaxase activity is the tyrosine 16. Tyrosine 17 (relaxase) is an active-site residue. Mg(2+) is bound by residues histidine 146, histidine 157, and histidine 159. Positions 950–1500 (GKEAVMPLME…LRDVAAGRAV (551 aa)) are DNA helicase I. 992-999 (GYAGVGKT) lines the ATP pocket. Positions 1534-1756 (RNGKSAGIWL…LQKEKTLGGD (223 aa)) are required for DNA transfer, may interact with TraM. A coiled-coil region spans residues 1717-1753 (QRVREAVREIARENLLQERLQQMERDMVRDLQKEKTL).

To TraI of plasmid IncFII R100. In terms of assembly, monomer. Part of the relaxosome, a complex composed of plasmid-encodes TraI, TraM, TraY and host-encoded IHF bound to the F plasmid origin of transfer (oriT). Directly contacts coupling protein TraD. Seems to directly contact TraM via its C-terminus. The cofactor is Mg(2+).

It is found in the cytoplasm. The catalysed reaction is ATP-independent breakage of single-stranded DNA, followed by passage and rejoining.. The enzyme catalyses ATP + H2O = ADP + phosphate + H(+). Its activity is regulated as follows. Nicking activity (relaxase) is inhibited by bisphosphonates such as the non-competitive inhibitor imidobisphosphate (PNP), etidronic acid (ETIDRO) and clodronic acid (CLODRO). The latter 2 are competitive inhibitors, and are already used clinically to treat bone loss (marketed as Didronel and Bonefos). All 3 compounds also inhibit conjugation and kill F plasmid-containing cells. They are specific to dual tyrosine relaxases such as those found in F and related R conjugative plasmids. Its function is as follows. Conjugative DNA transfer (CDT) is the unidirectional transfer of ssDNA plasmid from a donor to a recipient cell. It is the central mechanism by which antibiotic resistance and virulence factors are propagated in bacterial populations. Part of the relaxosome, which facilitates a site- and strand-specific cut in the origin of transfer by TraI, at the nic site. Relaxosome formation requires binding of IHF and TraY to the oriT region, which then facilitates binding of TraI relaxase. TraI forms a covalent 5'-phosphotyrosine intermediate linkage to the ssDNA. The transesterified T-strand moves from the donor cell to the recipient cell in a 5'to 3' direction, with the DNA helicase activity of TraI unwinding the DNA. DNA transfer occurs via the conjugative pore (transferosome) an intercellular junction mediated by a type IV secretion system, with TraD providing the means to link the relaxosome to the conjugative pore. The relaxase completes DNA transfer by reversing the covalent phosphotyrosine linkage and releasing the T-strand. TraI has also been identified as DNA helicase I. DNA. helicase I is a potent, highly processive DNA-dependent ATPase, able to unwind about 1.1 kb dsDNA per second in a 5' to 3' manner. The polypeptide is Multifunctional conjugation protein TraI (traI) (Escherichia coli (strain K12)).